Reading from the N-terminus, the 794-residue chain is Hyaluronan mediated motility receptor (794 aa).

Residues 1-87 are disordered; that stretch reads MSFPKAPLKR…SQKNDKDVKR (87 aa). A Phosphoserine modification is found at serine 20. Positions 74 to 87 are enriched in basic and acidic residues; it reads SKKDSQKNDKDVKR. Residues asparagine 134, asparagine 279, asparagine 446, asparagine 467, asparagine 488, asparagine 509, asparagine 530, asparagine 561, and asparagine 601 are each glycosylated (N-linked (GlcNAc...) asparagine). Residues 365 to 630 form a required for interaction with FAM83D region; that stretch reads EEMTSEKNVF…ITDLKNQLRQ (266 aa). 5 consecutive repeat copies span residues 442-462, 463-483, 484-504, 505-525, and 526-546. Positions 442–546 are 5 X 21 AA tandem repeats; the sequence is QEKYNDTAQS…RDVTAQLESY (105 aa). Hyaluronic acid-binding regions lie at residues 719–729 and 741–750; these read KQKIKHVVKLK and KLRSQLVKRK. Threonine 784 is modified (phosphothreonine).

As to quaternary structure, interacts with ANKRD26. Interacts with DYNLL1. Interacts with FAM83D/CHICA. In terms of tissue distribution, ubiquitously expressed.

It localises to the cell surface. The protein resides in the cytoplasm. The protein localises to the cytoskeleton. Its subcellular location is the spindle. Functionally, receptor for hyaluronic acid (HA). Involved in cell motility. When hyaluronan binds to HMMR, the phosphorylation of a number of proteins, including the PTK2/FAK1 occurs. May also be involved in cellular transformation and metastasis formation, and in regulating extracellular-regulated kinase (ERK) activity. May act as a regulator of adipogenesis. This chain is Hyaluronan mediated motility receptor (Hmmr), found in Mus musculus (Mouse).